The chain runs to 369 residues: Probable dual-specificity RNA methyltransferase RlmN (369 aa).

Residue E108 is the Proton acceptor of the active site. In terms of domain architecture, Radical SAM core spans 114-357; that stretch reads YPDRATVCIS…CTVRDTRGQE (244 aa). C121 and C362 are disulfide-bonded. [4Fe-4S] cluster contacts are provided by C128, C132, and C135. Residues 183–184, S217, 240–242, and N319 each bind S-adenosyl-L-methionine; these read GE and SLH. C362 functions as the S-methylcysteine intermediate in the catalytic mechanism.

The protein belongs to the radical SAM superfamily. RlmN family. [4Fe-4S] cluster serves as cofactor.

It localises to the cytoplasm. The enzyme catalyses adenosine(2503) in 23S rRNA + 2 reduced [2Fe-2S]-[ferredoxin] + 2 S-adenosyl-L-methionine = 2-methyladenosine(2503) in 23S rRNA + 5'-deoxyadenosine + L-methionine + 2 oxidized [2Fe-2S]-[ferredoxin] + S-adenosyl-L-homocysteine. The catalysed reaction is adenosine(37) in tRNA + 2 reduced [2Fe-2S]-[ferredoxin] + 2 S-adenosyl-L-methionine = 2-methyladenosine(37) in tRNA + 5'-deoxyadenosine + L-methionine + 2 oxidized [2Fe-2S]-[ferredoxin] + S-adenosyl-L-homocysteine. Specifically methylates position 2 of adenine 2503 in 23S rRNA and position 2 of adenine 37 in tRNAs. The chain is Probable dual-specificity RNA methyltransferase RlmN from Saccharopolyspora erythraea (strain ATCC 11635 / DSM 40517 / JCM 4748 / NBRC 13426 / NCIMB 8594 / NRRL 2338).